A 155-amino-acid chain; its full sequence is uncharacterized protein (155 aa).

The helical transmembrane segment at 5-25 (GIIICVGIAFLIFIFLWAYFK) threads the bilayer.

Its subcellular location is the membrane. This is an uncharacterized protein from Acheta domesticus (House cricket).